We begin with the raw amino-acid sequence, 389 residues long: Tryptophan synthase beta chain 1 (389 aa).

The residue at position 84 (K84) is an N6-(pyridoxal phosphate)lysine.

It belongs to the TrpB family. Tetramer of two alpha and two beta chains. Pyridoxal 5'-phosphate is required as a cofactor.

It localises to the plastid. The protein resides in the chloroplast. The catalysed reaction is (1S,2R)-1-C-(indol-3-yl)glycerol 3-phosphate + L-serine = D-glyceraldehyde 3-phosphate + L-tryptophan + H2O. It functions in the pathway amino-acid biosynthesis; L-tryptophan biosynthesis; L-tryptophan from chorismate: step 5/5. Functionally, the beta subunit is responsible for the synthesis of L-tryptophan from indole and L-serine. The polypeptide is Tryptophan synthase beta chain 1 (TSB1) (Zea mays (Maize)).